Consider the following 246-residue polypeptide: Probable transcriptional regulatory protein CLJ_B3338 (246 aa).

Belongs to the TACO1 family.

It is found in the cytoplasm. The polypeptide is Probable transcriptional regulatory protein CLJ_B3338 (Clostridium botulinum (strain 657 / Type Ba4)).